We begin with the raw amino-acid sequence, 180 residues long: Probable DNA-directed RNA polymerase subunit delta (180 aa).

Residues 14–81 (LSMIEVARAI…GHNVWALRSW (68 aa)) form the HTH HARE-type domain. The segment at 89–180 (EEVNHPEDEE…HQDDLDDDDE (92 aa)) is disordered. Residues 115-163 (DSDDDDIIDYDSDDPEDEDLDVDEEDTNEDDYSDDDLDDADDNELDDGI) show a composition bias toward acidic residues.

This sequence belongs to the RpoE family. As to quaternary structure, RNAP is composed of a core of 2 alpha, a beta and a beta' subunits. The core is associated with a delta subunit and one of several sigma factors.

In terms of biological role, participates in both the initiation and recycling phases of transcription. In the presence of the delta subunit, RNAP displays an increased specificity of transcription, a decreased affinity for nucleic acids, and an increased efficiency of RNA synthesis because of enhanced recycling. The protein is Probable DNA-directed RNA polymerase subunit delta of Lactobacillus johnsonii (strain CNCM I-12250 / La1 / NCC 533).